Here is a 682-residue protein sequence, read N- to C-terminus: Potassium-transporting ATPase ATP-binding subunit (682 aa).

Transmembrane regions (helical) follow at residues 34-54, 58-78, 219-239, and 254-274; these read PVMF…LAMV, IAGS…TVLF, IALT…TATL, and VLVA…LSAI. The active-site 4-aspartylphosphate intermediate is Asp307. Residues Asp344, Glu348, 377 to 384, and Lys395 each bind ATP; that span reads FTAQSRMS. Residues Asp518 and Asp522 each contribute to the Mg(2+) site. 3 consecutive transmembrane segments (helical) span residues 588–608, 616–636, and 662–682; these read FAII…LNVM, AILS…PLAL, and LVVP…LGLA.

This sequence belongs to the cation transport ATPase (P-type) (TC 3.A.3) family. Type IA subfamily. In terms of assembly, the system is composed of three essential subunits: KdpA, KdpB and KdpC.

The protein localises to the cell inner membrane. It catalyses the reaction K(+)(out) + ATP + H2O = K(+)(in) + ADP + phosphate + H(+). In terms of biological role, part of the high-affinity ATP-driven potassium transport (or Kdp) system, which catalyzes the hydrolysis of ATP coupled with the electrogenic transport of potassium into the cytoplasm. This subunit is responsible for energy coupling to the transport system and for the release of the potassium ions to the cytoplasm. This Salmonella typhimurium (strain LT2 / SGSC1412 / ATCC 700720) protein is Potassium-transporting ATPase ATP-binding subunit.